Consider the following 97-residue polypeptide: Aspartyl/glutamyl-tRNA(Asn/Gln) amidotransferase subunit C (97 aa).

The protein belongs to the GatC family. As to quaternary structure, heterotrimer of A, B and C subunits.

The enzyme catalyses L-glutamyl-tRNA(Gln) + L-glutamine + ATP + H2O = L-glutaminyl-tRNA(Gln) + L-glutamate + ADP + phosphate + H(+). It catalyses the reaction L-aspartyl-tRNA(Asn) + L-glutamine + ATP + H2O = L-asparaginyl-tRNA(Asn) + L-glutamate + ADP + phosphate + 2 H(+). Functionally, allows the formation of correctly charged Asn-tRNA(Asn) or Gln-tRNA(Gln) through the transamidation of misacylated Asp-tRNA(Asn) or Glu-tRNA(Gln) in organisms which lack either or both of asparaginyl-tRNA or glutaminyl-tRNA synthetases. The reaction takes place in the presence of glutamine and ATP through an activated phospho-Asp-tRNA(Asn) or phospho-Glu-tRNA(Gln). In Synechococcus sp. (strain CC9605), this protein is Aspartyl/glutamyl-tRNA(Asn/Gln) amidotransferase subunit C.